We begin with the raw amino-acid sequence, 441 residues long: MAASLSTVGAVNRTLLNLNGSGGGASGPSSAFFGTSLKKVISSRVPNSKLTSGSFKIVAADKEIEETQQTEGDRWRGLAYDVSDDQQDITRGKGLVDSLFQAPMDAGTHYAVISSHKYLSAGLRQYNFDNIKDGFYIAPAFLDKLVVHIAKNFMTLPNIKVPLILGVWGGKGQGKSFQCELVFAKMGINPIMMSAGELESGNAGEPAKLIRQRYREASDLIKKGKMCVLFINDLDAGAGRLGGTTQYTVNNQMVNATLMNIADNPTNVQLPGMYNKEDNARVPIIVTGNDFSTLYAPLIRDGRMEKFYWAPTREDRIGVCKGIFRTDGVPEKDIVELVDKHPGQSIDFFGALRARVYDDEVRKWISGVGVDSVGKKLVNSKEGPPTFDQPKMTLDKLLLYASMLVQEQENVKRVQLADQYLNEAALGNANEDAIKSGSFFK.

167–174 provides a ligand contact to ATP; sequence VWGGKGQG.

The protein belongs to the RuBisCO activase family.

It localises to the plastid. The protein localises to the chloroplast stroma. Activation of RuBisCO (ribulose-1,5-bisphosphate carboxylase/oxygenase; EC 4.1.1.39) involves the ATP-dependent carboxylation of the epsilon-amino group of lysine leading to a carbamate structure. The protein is Ribulose bisphosphate carboxylase/oxygenase activase, chloroplastic (RCA1) of Phaseolus vulgaris (Kidney bean).